The primary structure comprises 181 residues: Large ribosomal subunit protein uL5c (181 aa).

The protein belongs to the universal ribosomal protein uL5 family. As to quaternary structure, part of the 50S ribosomal subunit; contacts the 5S rRNA.

It localises to the plastid. Its subcellular location is the chloroplast. Binds 5S rRNA, forms part of the central protuberance of the 50S subunit. This is Large ribosomal subunit protein uL5c (rpl5) from Porphyra purpurea (Red seaweed).